The chain runs to 230 residues: Ion-translocating oxidoreductase complex subunit E (230 aa).

6 helical membrane-spanning segments follow: residues 18-38 (ALVQ…ATNA), 39-59 (LGLG…VSAL), 63-83 (TPAE…VSAV), 86-106 (LINA…PLIV), 125-145 (WLSA…MFVL), and 182-202 (PFLL…MLAV).

It belongs to the NqrDE/RnfAE family. In terms of assembly, the complex is composed of six subunits: RsxA, RsxB, RsxC, RsxD, RsxE and RsxG.

The protein localises to the cell inner membrane. In terms of biological role, part of a membrane-bound complex that couples electron transfer with translocation of ions across the membrane. Required to maintain the reduced state of SoxR. This chain is Ion-translocating oxidoreductase complex subunit E, found in Salmonella agona (strain SL483).